Reading from the N-terminus, the 1364-residue chain is MSNSIEAKLQEDLRDALVDYYLGQIVPNSKDFTNLRSTIKNVDDLYDHLLLDTQVSAKVITSRLSLVTQSVQQYINRIALNLEPGLSINQQEATDWEEFANRYGYWAANQQLRMFPEIYVDPTLRLTKTEFFFQLESALNQGKLTDDVAQKAVLGYLNNFEEVSNLEIIAGYQDGIDIENDKTYFVARTRMQPYRYFWRSLDASQRNANSQELYPTAWSEWKAISVPLENVANGIVRPIMMDNRLYISWFEVAEEKETDSDGNIIVSGRYRTKIRLAHLGFDGVWSSGTTLREEVLADQMEEMIAVVDRMEDEPRLALVAFKEMSESWDVVFSYICDSMLIESSNLPTTTHPPKPGDGDKGLSDLDDYGANLVWFYLHETANGGKAEYKQLILYPVIINRDWPIELDKTHQGDFGTVDDFTLNSNYTGDELSLYLQSSSTYKYDFSKSKNIIYGIWKEDANNNRCWLNYKLLTPEDYEPQINATLVMCDKGDVNIITGFSLPNGGVDAGGKIKVTLRVGKKLRDKFQIKQFSQTQYLQFPEASSADVWYIGKQIRLNTLFAKELIGKASRSLDLVLSWETQNSRLEEAILGGAAELIDLDGANGIYFWELFFHMPFMVSWRFNVEQRYEDANRWVKYLFNPFECEDEPALLLGKPPYWNSRPLVDEPFKGYSLTQPSDPDAIAASDPIHYRKAVFNFLTKNIIDQGDMEYRKLQPSARTLARLSYSTASSLLGRRPDVQLTSFWQPLTLEDASYKTDSEIRAIEMQSQPLTFEPVVHDQTMSAVDNDIFMYPMNNELRGLWDRIENRIYNLRHNLTLDGKEINMDLYDSSISPRGLMKQRYQRVVTARNASKMNFKVPNYRFEPMLNRSKSGVETLIQFGSTLLSLLERKDSLSFDAYQMIQSGDLYRFSIDLQQQDIDINKASLEALQVSKQSAQDRYDHFKELYDENISSTEQKVIELQSQAANSLLMAQGMRTAAAALDVIPNIYGLAVGGSHWGAPLNAAAEIIMIKYQADSSKSESLSVSESYRRRRQEWELQYKQAEWEVNSVEQQINLQNMQIKAANKRLEQVEAQQQQAMALLDYFSERFTNESLYTWLISQLSSLYLQAYDAVLSLCLSAEASLLYELNLGEQSFVGGGGWNDLYQGLMAGETLKLALMRMERVYVEQNSRRQEITKTISLKALLGESWPAELNKLKQKTPINFNLEEQIFVEDYQELYQRRIKSVSVSLPMLVGPYEDVCAQLTQTSSSYSTRADLKTVENMLTKRTFADTPHLVRSIQPNQQISLSTGVNDSGLFMLNFDDERFLPFEGSGVDSSWRLQFTNLKQNLDSLNDVILHVKYTAAIGSSTFSQGVRKILANINNDE.

Positions 1025–1080 (SESYRRRRQEWELQYKQAEWEVNSVEQQINLQNMQIKAANKRLEQVEAQQQQAMAL) form a coiled coil.

In terms of assembly, semipurified toxin complex consists of at least YenA1-YenA2-YenB-YenC1-YenC2-Chi1-Chi2. The Yen-TC:K9 subcomplex is about 26 nm tall and 22 nm in diameter with 5-fold symmetry and 5 copies of YenA1, YenA2, Chi1 and Chi2; the chitinase subunits may be solvent accessible on the exterior the complex. The Yen-TC:K9 subcomplex has no insecticidal activity. The native complex with additional YenB, YenC1 and YenC2 subunits is 16 nm taller and is insecticidal; the toxicity-conferring subunits are present at about 1 copy each. The isolated toxin complex includes 3 peptides starting between residues 768 and 778 of this protein, which might be physiologically relevant.

It localises to the secreted. In terms of biological role, part of an orally active toxin complex (TC) with strong insecticidal effects on larvae of the Coleoptera Costelytra zealandica, Acrossidius tasmania and Adoryphorus couloni and some Lepidoptera larvae. The TC has an endochitinase activity. The chain is Toxin subunit YenA2 from Yersinia entomophaga.